The sequence spans 217 residues: Octanoyltransferase (217 aa).

The region spanning 32–207 (DDSADEIWLV…HMIKKLNATQ (176 aa)) is the BPL/LPL catalytic domain. Residues 71–78 (RGGQVTYH), 138–140 (SLG), and 151–153 (GLA) each bind substrate. Catalysis depends on Cys-169, which acts as the Acyl-thioester intermediate.

This sequence belongs to the LipB family.

Its subcellular location is the cytoplasm. It carries out the reaction octanoyl-[ACP] + L-lysyl-[protein] = N(6)-octanoyl-L-lysyl-[protein] + holo-[ACP] + H(+). Its pathway is protein modification; protein lipoylation via endogenous pathway; protein N(6)-(lipoyl)lysine from octanoyl-[acyl-carrier-protein]: step 1/2. Its function is as follows. Catalyzes the transfer of endogenously produced octanoic acid from octanoyl-acyl-carrier-protein onto the lipoyl domains of lipoate-dependent enzymes. Lipoyl-ACP can also act as a substrate although octanoyl-ACP is likely to be the physiological substrate. This is Octanoyltransferase from Pseudoalteromonas translucida (strain TAC 125).